The following is a 260-amino-acid chain: NAD-capped RNA hydrolase NudC (260 aa).

Substrate is bound by residues Lys-25 and Arg-69. Positions 98 and 101 each coordinate Zn(2+). Glu-111 is a substrate binding site. 2 residues coordinate Zn(2+): Cys-116 and Cys-119. Tyr-124 is a binding site for substrate. Positions 125 to 248 constitute a Nudix hydrolase domain; the sequence is PQIAPCVIVA…TVARRLIEDT (124 aa). Positions 158, 174, and 178 each coordinate a divalent metal cation. Positions 159-180 match the Nudix box motif; that stretch reads GFVEVGETLEQAVSREVLEESN. Residue 192 to 199 participates in substrate binding; the sequence is QPWPFPHS. Glu-219 contributes to the a divalent metal cation binding site. Residue Ala-241 participates in substrate binding.

This sequence belongs to the Nudix hydrolase family. NudC subfamily. In terms of assembly, homodimer. Mg(2+) is required as a cofactor. Requires Mn(2+) as cofactor. Zn(2+) serves as cofactor.

The catalysed reaction is a 5'-end NAD(+)-phospho-ribonucleoside in mRNA + H2O = a 5'-end phospho-adenosine-phospho-ribonucleoside in mRNA + beta-nicotinamide D-ribonucleotide + 2 H(+). The enzyme catalyses NAD(+) + H2O = beta-nicotinamide D-ribonucleotide + AMP + 2 H(+). It catalyses the reaction NADH + H2O = reduced beta-nicotinamide D-ribonucleotide + AMP + 2 H(+). Functionally, mRNA decapping enzyme that specifically removes the nicotinamide adenine dinucleotide (NAD) cap from a subset of mRNAs by hydrolyzing the diphosphate linkage to produce nicotinamide mononucleotide (NMN) and 5' monophosphate mRNA. The NAD-cap is present at the 5'-end of some mRNAs and stabilizes RNA against 5'-processing. Has preference for mRNAs with a 5'-end purine. Catalyzes the hydrolysis of a broad range of dinucleotide pyrophosphates. This chain is NAD-capped RNA hydrolase NudC, found in Yersinia pestis bv. Antiqua (strain Antiqua).